Reading from the N-terminus, the 139-residue chain is MWLINHTYKLLSYFLRKASNRFFNSSSSSFSCSFLVFLFVVFFSDCFFSITSFLISFGILSSFLIFSLFCLGFLTVIGCLASALSLSSLSKAKIGFSSSLSSISPEGSLKSEEMLEDDEDKEFSSLLYGTSYVFAISFK.

Transmembrane regions (helical) follow at residues 35 to 55 and 57 to 77; these read LVFL…SFLI and FGIL…LTVI.

Its subcellular location is the membrane. This is an uncharacterized protein from Saccharomyces cerevisiae (strain ATCC 204508 / S288c) (Baker's yeast).